The primary structure comprises 302 residues: Endochitinase 2 (302 aa).

One can recognise a Chitin-binding type-1 domain in the interval 1–42 (EQCGRQAGGALCPGGLCCSQFGWCGSTADYCTVPGCQSQCSG). 7 disulfide bridges follow: C3-C18, C12-C24, C17-C31, C36-C40, C73-C136, C148-C156, and C255-C287. E117 acts as the Proton donor in catalysis. Residues 296-302 (GVSVDSM) constitute a propeptide, removed in mature form.

This sequence belongs to the glycosyl hydrolase 19 family. Chitinase class I subfamily.

It carries out the reaction Random endo-hydrolysis of N-acetyl-beta-D-glucosaminide (1-&gt;4)-beta-linkages in chitin and chitodextrins.. In terms of biological role, defense against chitin-containing fungal pathogens. This Gossypium hirsutum (Upland cotton) protein is Endochitinase 2.